The primary structure comprises 407 residues: Lysosomal phospholipase A and acyltransferase (407 aa).

The N-terminal stretch at 1-29 (MGCLCLYRSTLLTGGLLFLLMLADPAFPA) is a signal peptide. Aspartate 41 is a binding site for substrate. An intrachain disulfide couples cysteine 60 to cysteine 84. A glycan (N-linked (GlcNAc...) asparagine) is linked at asparagine 94. Serine 193 serves as the catalytic Acyl-ester intermediate. A Zn(2+)-binding site is contributed by serine 193. Methionine 194 lines the substrate pocket. A glycan (N-linked (GlcNAc...) asparagine) is linked at asparagine 284. Residues aspartate 355 and histidine 387 each act as charge relay system in the active site. Histidine 387 is a binding site for Zn(2+). N-linked (GlcNAc...) asparagine glycosylation is present at asparagine 393.

It belongs to the AB hydrolase superfamily. Lipase family. Post-translationally, N-glycosylated. N-glycosylated. N-glycosylation is important for maturation of the enzyme and normal subcellular location. Detected in brain (at protein level).

Its subcellular location is the lysosome. The protein localises to the secreted. It localises to the membrane. It catalyses the reaction a 1,2-diacyl-sn-glycero-3-phosphocholine + H2O = a 2-acyl-sn-glycero-3-phosphocholine + a fatty acid + H(+). The enzyme catalyses 1-hexadecanoyl-2-(9Z-octadecenoyl)-sn-glycero-3-phosphocholine + H2O = 2-(9Z-octadecenoyl)-sn-glycero-3-phosphocholine + hexadecanoate + H(+). It carries out the reaction 1,2-di-(9Z-octadecenoyl)-sn-glycero-3-phosphocholine + H2O = 2-(9Z-octadecenoyl)-sn-glycero-3-phosphocholine + (9Z)-octadecenoate + H(+). The catalysed reaction is 1-hexadecanoyl-2-glutaroyl-sn-glycero-3-phosphocholine + H2O = 2-glutaroyl-sn-glycero-3-phosphocholine + hexadecanoate + H(+). It catalyses the reaction 1-hexadecanoyl-2-nonadioyl-sn-glycero-3-phosphocholine + H2O = 2-nonadioyl-sn-glycero-3-phosphocholine + hexadecanoate + H(+). The enzyme catalyses 1-hexadecanoyl-2-(5-oxopentanoyl)-sn-glycero-3-phosphocholine + H2O = 2-(5-oxopentanoyl)-sn-glycero-3-phosphocholine + hexadecanoate + H(+). It carries out the reaction 1-hexadecanoyl-2-(9-oxononanoyl)-sn-glycero-3-phosphocholine + H2O = 2-(9-oxononanoyl)-sn-glycero-3-phosphocholine + hexadecanoate + H(+). The catalysed reaction is 1,2-dihexadecanoyl-sn-glycero-3-phosphocholine + H2O = 2-hexadecanoyl-sn-glycero-3-phosphocholine + hexadecanoate + H(+). It catalyses the reaction a 1,2-diacyl-sn-glycero-3-phosphocholine + H2O = a 1-acyl-sn-glycero-3-phosphocholine + a fatty acid + H(+). The enzyme catalyses 1-hexadecanoyl-2-(9Z-octadecenoyl)-sn-glycero-3-phosphocholine + H2O = 1-hexadecanoyl-sn-glycero-3-phosphocholine + (9Z)-octadecenoate + H(+). It carries out the reaction 1,2-di-(9Z-octadecenoyl)-sn-glycero-3-phosphocholine + H2O = 1-(9Z-octadecenoyl)-sn-glycero-3-phosphocholine + (9Z)-octadecenoate + H(+). The catalysed reaction is 1,2-dihexadecanoyl-sn-glycero-3-phosphocholine + H2O = 1-hexadecanoyl-sn-glycero-3-phosphocholine + hexadecanoate + H(+). It catalyses the reaction a 1-acyl-sn-glycero-3-phosphocholine + H2O = sn-glycerol 3-phosphocholine + a fatty acid + H(+). The enzyme catalyses 1-hexadecanoyl-sn-glycero-3-phosphocholine + H2O = sn-glycerol 3-phosphocholine + hexadecanoate + H(+). It carries out the reaction N-(acetyl)-sphing-4-enine + a 1,2-diacyl-sn-glycero-3-phosphoethanolamine = 1-O-acyl-N-(acetyl)-sphing-4-enine + a 2-acyl-sn-glycero-3-phosphoethanolamine. The catalysed reaction is 1-hexadecanoyl-2-(9Z-octadecenoyl)-sn-glycero-3-phosphoethanolamine + N-(acetyl)-sphing-4-enine = 2-(9Z-octadecenoyl)-sn-glycero-3-phosphoethanolamine + 1-hexadecanoyl-N-(acetyl)-sphing-4-enine. It catalyses the reaction 1-hexadecanoyl-2-(9Z,12Z-octadecadienoyl)-sn-glycero-3-phosphoethanolamine + N-(acetyl)-sphing-4-enine = 2-(9Z,12Z)-octadecadienoyl-sn-glycero-3-phosphoethanolamine + 1-hexadecanoyl-N-(acetyl)-sphing-4-enine. The enzyme catalyses 1-hexadecanoyl-2-(5Z,8Z,11Z,14Z-eicosatetraenoyl)-sn-glycero-3-phosphoethanolamine + N-(acetyl)-sphing-4-enine = 2-(5Z,8Z,11Z,14Z)-eicosatetraenoyl-sn-glycero-3-phosphoethanolamine + 1-hexadecanoyl-N-(acetyl)-sphing-4-enine. It carries out the reaction N-(acetyl)-sphing-4-enine + a 1,2-diacyl-sn-glycero-3-phosphoethanolamine = 1-O-acyl-N-(acetyl)-sphing-4-enine + a 1-acyl-sn-glycero-3-phosphoethanolamine. The catalysed reaction is 1-hexadecanoyl-2-(9Z-octadecenoyl)-sn-glycero-3-phosphoethanolamine + N-(acetyl)-sphing-4-enine = 1-(9Z-octadecenoyl)-N-(acetyl)-sphing-4-enine + 1-hexadecanoyl-sn-glycero-3-phosphoethanolamine. It catalyses the reaction 1-hexadecanoyl-2-(9Z,12Z-octadecadienoyl)-sn-glycero-3-phosphoethanolamine + N-(acetyl)-sphing-4-enine = 1-(9Z,12Z-octadecadienoyl)-N-acetylsphing-4-enine + 1-hexadecanoyl-sn-glycero-3-phosphoethanolamine. The enzyme catalyses 1-hexadecanoyl-2-(5Z,8Z,11Z,14Z-eicosatetraenoyl)-sn-glycero-3-phosphoethanolamine + N-(acetyl)-sphing-4-enine = 1-(5Z,8Z,11Z,14Z)-eicosatetraenoyl-N-(acetyl)-sphing-4-enine + 1-hexadecanoyl-sn-glycero-3-phosphoethanolamine. It carries out the reaction N-(acetyl)-sphing-4-enine + a 1,2-diacyl-sn-glycero-3-phosphocholine = 1-O-acyl-N-(acetyl)-sphing-4-enine + a 2-acyl-sn-glycero-3-phosphocholine. The catalysed reaction is 1-hexadecanoyl-2-(9Z-octadecenoyl)-sn-glycero-3-phosphocholine + N-(acetyl)-sphing-4-enine = 1-hexadecanoyl-N-(acetyl)-sphing-4-enine + 2-(9Z-octadecenoyl)-sn-glycero-3-phosphocholine. It catalyses the reaction 1-hexadecanoyl-2-(9Z,12Z-octadecadienoyl)-sn-glycero-3-phosphocholine + N-(acetyl)-sphing-4-enine = 2-(9Z,12Z-octadecadienoyl)-sn-glycero-3-phosphocholine + 1-hexadecanoyl-N-(acetyl)-sphing-4-enine. The enzyme catalyses 1-hexadecanoyl-2-(5Z,8Z,11Z,14Z-eicosatetraenoyl)-sn-glycero-3-phosphocholine + N-(acetyl)-sphing-4-enine = 1-hexadecanoyl-N-(acetyl)-sphing-4-enine + 2-(5Z,8Z,11Z,14Z)-eicosatetraenoyl-sn-glycero-3-phosphocholine. It carries out the reaction 1-hexadecanoyl-2-(4Z,7Z,10Z,13Z,16Z,19Z-docosahexaenoyl)-sn-glycero-3-phosphocholine + N-(acetyl)-sphing-4-enine = 2-(4Z,7Z,10Z,13Z,16Z,19Z-docosahexaenoyl)-sn-glycero-3-phosphocholine + 1-hexadecanoyl-N-(acetyl)-sphing-4-enine. The catalysed reaction is 1-hexadecanoyl-2-nonadioyl-sn-glycero-3-phosphocholine + N-(acetyl)-sphing-4-enine = 2-nonadioyl-sn-glycero-3-phosphocholine + 1-hexadecanoyl-N-(acetyl)-sphing-4-enine. It catalyses the reaction 1-octadecanoyl-2-(9Z-octadecenoyl)-sn-glycero-3-phosphocholine + N-(acetyl)-sphing-4-enine = 1-octadecanoyl-N-(acetyl)-sphing-4-enine + 2-(9Z-octadecenoyl)-sn-glycero-3-phosphocholine. The enzyme catalyses 1-(9Z)-octadecenoyl-2-octadecanoyl-sn-glycero-3-phosphocholine + N-(acetyl)-sphing-4-enine = 2-octadecanoyl-sn-glycero-3-phosphocholine + 1-(9Z-octadecenoyl)-N-(acetyl)-sphing-4-enine. It carries out the reaction 1-octadecanoyl-2-(5Z,8Z,11Z,14Z-eicosatetraenoyl)-sn-glycero-3-phosphocholine + N-(acetyl)-sphing-4-enine = 1-octadecanoyl-N-(acetyl)-sphing-4-enine + 2-(5Z,8Z,11Z,14Z)-eicosatetraenoyl-sn-glycero-3-phosphocholine. The catalysed reaction is 1-(9Z-octadecenoyl)-2-hexadecanoyl-sn-glycero-3-phosphocholine + N-(acetyl)-sphing-4-enine = 1-(9Z-octadecenoyl)-N-(acetyl)-sphing-4-enine + 2-hexadecanoyl-sn-glycero-3-phosphocholine. It catalyses the reaction N-(acetyl)-sphing-4-enine + a 1,2-diacyl-sn-glycero-3-phosphocholine = 1-O-acyl-N-(acetyl)-sphing-4-enine + a 1-acyl-sn-glycero-3-phosphocholine. The enzyme catalyses 1-hexadecanoyl-2-(9Z-octadecenoyl)-sn-glycero-3-phosphocholine + N-(acetyl)-sphing-4-enine = 1-(9Z-octadecenoyl)-N-(acetyl)-sphing-4-enine + 1-hexadecanoyl-sn-glycero-3-phosphocholine. It carries out the reaction 1-hexadecanoyl-2-(9Z,12Z-octadecadienoyl)-sn-glycero-3-phosphocholine + N-(acetyl)-sphing-4-enine = 1-(9Z,12Z-octadecadienoyl)-N-acetylsphing-4-enine + 1-hexadecanoyl-sn-glycero-3-phosphocholine. The catalysed reaction is 1-hexadecanoyl-2-(5Z,8Z,11Z,14Z-eicosatetraenoyl)-sn-glycero-3-phosphocholine + N-(acetyl)-sphing-4-enine = 1-(5Z,8Z,11Z,14Z)-eicosatetraenoyl-N-(acetyl)-sphing-4-enine + 1-hexadecanoyl-sn-glycero-3-phosphocholine. It catalyses the reaction 1-hexadecanoyl-2-(4Z,7Z,10Z,13Z,16Z,19Z-docosahexaenoyl)-sn-glycero-3-phosphocholine + N-(acetyl)-sphing-4-enine = 1-(4Z,7Z,10Z,13Z,16Z,19Z-docosahexaenoyl)-N-(acetyl)-sphing-4-enine + 1-hexadecanoyl-sn-glycero-3-phosphocholine. The enzyme catalyses 1-octadecanoyl-2-(9Z-octadecenoyl)-sn-glycero-3-phosphocholine + N-(acetyl)-sphing-4-enine = 1-(9Z-octadecenoyl)-N-(acetyl)-sphing-4-enine + 1-octadecanoyl-sn-glycero-3-phosphocholine. It carries out the reaction 1-octadecanoyl-2-(9Z,12Z)-octadecadienoyl-sn-glycero-3-phosphocholine + N-(acetyl)-sphing-4-enine = 1-(9Z,12Z-octadecadienoyl)-N-acetylsphing-4-enine + 1-octadecanoyl-sn-glycero-3-phosphocholine. The catalysed reaction is 1-(9Z-octadecenoyl)-2-hexadecanoyl-sn-glycero-3-phosphocholine + N-(acetyl)-sphing-4-enine = 1-hexadecanoyl-N-(acetyl)-sphing-4-enine + 1-(9Z-octadecenoyl)-sn-glycero-3-phosphocholine. It catalyses the reaction 1-(9Z)-octadecenoyl-2-octadecanoyl-sn-glycero-3-phosphocholine + N-(acetyl)-sphing-4-enine = 1-octadecanoyl-N-(acetyl)-sphing-4-enine + 1-(9Z-octadecenoyl)-sn-glycero-3-phosphocholine. The enzyme catalyses 1,2-di-(9Z-octadecenoyl)-sn-glycero-3-phosphocholine + N-(acetyl)-sphing-4-enine = 1-(9Z-octadecenoyl)-N-(acetyl)-sphing-4-enine + 1-(9Z-octadecenoyl)-sn-glycero-3-phosphocholine. It carries out the reaction 1-octadecanoyl-2-(5Z,8Z,11Z,14Z-eicosatetraenoyl)-sn-glycero-3-phosphocholine + N-(acetyl)-sphing-4-enine = 1-(5Z,8Z,11Z,14Z)-eicosatetraenoyl-N-(acetyl)-sphing-4-enine + 1-octadecanoyl-sn-glycero-3-phosphocholine. The catalysed reaction is a 1,2-diacyl-sn-glycero-3-phospho-L-serine + N-(acetyl)-sphing-4-enine = a 2-acyl-sn-glycero-3-phospho-L-serine + 1-O-acyl-N-(acetyl)-sphing-4-enine. It catalyses the reaction 1-octadecanoyl-2-(9Z-octadecenoyl)-sn-glycero-3-phospho-L-serine + N-(acetyl)-sphing-4-enine = 2-(9Z-octadecenoyl)-sn-glycero-3-phospho-L-serine + 1-octadecanoyl-N-(acetyl)-sphing-4-enine. The enzyme catalyses a 1,2-diacyl-sn-glycero-3-phospho-L-serine + N-(acetyl)-sphing-4-enine = 1-O-acyl-N-(acetyl)-sphing-4-enine + a 1-acyl-sn-glycero-3-phospho-L-serine. It carries out the reaction 1-octadecanoyl-2-(9Z-octadecenoyl)-sn-glycero-3-phospho-L-serine + N-(acetyl)-sphing-4-enine = 1-octadecanoyl-sn-glycero-3-phosphoserine + 1-(9Z-octadecenoyl)-N-(acetyl)-sphing-4-enine. The catalysed reaction is a 1,2-diacyl-sn-glycero-3-phospho-(1'-sn-glycerol) + N-(acetyl)-sphing-4-enine = 2-acyl-sn-glycero-3-phospho-(1'-sn-glycerol) + 1-O-acyl-N-(acetyl)-sphing-4-enine. It catalyses the reaction 1-octadecanoyl-2-(9Z-octadecenoyl)-sn-glycero-3-phospho-(1'-sn-glycerol) + N-(acetyl)-sphing-4-enine = 2-(9Z-octadecenoyl)-sn-glycero-3-phospho-(1'-sn-glycerol) + 1-octadecanoyl-N-(acetyl)-sphing-4-enine. The enzyme catalyses a 1,2-diacyl-sn-glycero-3-phospho-(1'-sn-glycerol) + N-(acetyl)-sphing-4-enine = 1-O-acyl-N-(acetyl)-sphing-4-enine + 1-acyl-sn-glycero-3-phospho-(1'-sn-glycerol). It carries out the reaction 1-octadecanoyl-2-(9Z-octadecenoyl)-sn-glycero-3-phospho-(1'-sn-glycerol) + N-(acetyl)-sphing-4-enine = 1-octadecanoyl-sn-glycero-3-phospho-(1'-sn-glycerol) + 1-(9Z-octadecenoyl)-N-(acetyl)-sphing-4-enine. The catalysed reaction is an N-acylethanolamine + a 1,2-diacyl-sn-glycero-3-phosphocholine = 2-(acylamino)ethyl fatty acid + a 2-acyl-sn-glycero-3-phosphocholine. It catalyses the reaction an N-acylethanolamine + a 1,2-diacyl-sn-glycero-3-phosphocholine = 2-(acylamino)ethyl fatty acid + a 1-acyl-sn-glycero-3-phosphocholine. The enzyme catalyses N-(5Z,8Z,11Z,14Z-eicosatetraenoyl)-ethanolamine + 1,2-di-(9Z-octadecenoyl)-sn-glycero-3-phosphocholine = 2-[(5Z,8Z,11Z,14Z)-eicosatetraenoylamino]ethyl (9Z)-octadecenoate + (9Z-octadecenoyl)-sn-glycero-3-phosphocholine. It carries out the reaction N-(9Z-octadecenoyl) ethanolamine + 1,2-di-(9Z-octadecenoyl)-sn-glycero-3-phosphocholine = 2-[(9Z)-octadecenoylamino]ethyl (9Z)-octadecenoate + (9Z-octadecenoyl)-sn-glycero-3-phosphocholine. The catalysed reaction is a 3-acyl-sn-glycerol + a 1,2-diacyl-sn-glycero-3-phosphocholine = a 1,3-diacylglycerol + a 1-acyl-sn-glycero-3-phosphocholine. It catalyses the reaction a 3-acyl-sn-glycerol + a 1,2-diacyl-sn-glycero-3-phosphocholine = a 1,3-diacylglycerol + a 2-acyl-sn-glycero-3-phosphocholine. The enzyme catalyses 3-(9Z-octadecenoyl)-sn-glycerol + 1,2-di-(9Z-octadecenoyl)-sn-glycero-3-phosphocholine = 1,3-di-(9Z-octadecenoyl)-glycerol + (9Z-octadecenoyl)-sn-glycero-3-phosphocholine. It carries out the reaction 3-hexadecanoyl-sn-glycerol + 1,2-di-(9Z-octadecenoyl)-sn-glycero-3-phosphocholine = 1-(9Z)-octadecenoyl-3-hexadecanoyl-sn-glycerol + (9Z-octadecenoyl)-sn-glycero-3-phosphocholine. The catalysed reaction is a 1-acyl-sn-glycerol + a 1,2-diacyl-sn-glycero-3-phosphocholine = a 1,3-diacylglycerol + a 2-acyl-sn-glycero-3-phosphocholine. It catalyses the reaction a 1-acyl-sn-glycerol + a 1,2-diacyl-sn-glycero-3-phosphocholine = a 1,3-diacylglycerol + a 1-acyl-sn-glycero-3-phosphocholine. The enzyme catalyses 1-(9Z-octadecenoyl)-sn-glycerol + 1,2-di-(9Z-octadecenoyl)-sn-glycero-3-phosphocholine = 1,3-di-(9Z-octadecenoyl)-glycerol + (9Z-octadecenoyl)-sn-glycero-3-phosphocholine. It carries out the reaction 1-hexadecanoyl-sn-glycerol + 1,2-di-(9Z-octadecenoyl)-sn-glycero-3-phosphocholine = 1-hexadecanoyl-3-(9Z)-octadecenoyl-sn-glycerol + (9Z-octadecenoyl)-sn-glycero-3-phosphocholine. The catalysed reaction is a 2-acylglycerol + a 1,2-diacyl-sn-glycero-3-phosphocholine = a 1,2-diacylglycerol + a 2-acyl-sn-glycero-3-phosphocholine. It catalyses the reaction a 2-acylglycerol + a 1,2-diacyl-sn-glycero-3-phosphocholine = a 1,2-diacylglycerol + a 1-acyl-sn-glycero-3-phosphocholine. The enzyme catalyses 2-hexadecanoylglycerol + 1,2-di-(9Z-octadecenoyl)-sn-glycero-3-phosphocholine = 1-(9Z)-octadecenoyl-2-hexadecanoylglycerol + (9Z-octadecenoyl)-sn-glycero-3-phosphocholine. It carries out the reaction 1-O-alkylglycerol + a 1,2-diacyl-sn-glycero-3-phosphocholine = 1-O-alkyl-3-acylglycerol + a 1-acyl-sn-glycero-3-phosphocholine. The catalysed reaction is 1-O-alkylglycerol + a 1,2-diacyl-sn-glycero-3-phosphocholine = 1-O-alkyl-3-acylglycerol + a 2-acyl-sn-glycero-3-phosphocholine. It catalyses the reaction 1-O-hexadecylglycerol + 1,2-di-(9Z-octadecenoyl)-sn-glycero-3-phosphocholine = 1-O-hexadecyl-3-(9Z)-octadecenoylglycerol + (9Z-octadecenoyl)-sn-glycero-3-phosphocholine. The enzyme catalyses 1-O-alkyl-2-acyl-sn-glycerol + a 1,2-diacyl-sn-glycero-3-phosphocholine = 1-O-alkyl-2,3-diacyl-sn-glycerol + a 2-acyl-sn-glycero-3-phosphocholine. It carries out the reaction 1-O-alkyl-2-acyl-sn-glycerol + a 1,2-diacyl-sn-glycero-3-phosphocholine = 1-O-alkyl-2,3-diacyl-sn-glycerol + a 1-acyl-sn-glycero-3-phosphocholine. The catalysed reaction is 1-O-hexadecyl-2-acetyl-sn-glycerol + 1,2-di-(9Z-octadecenoyl)-sn-glycero-3-phosphocholine = 1-O-hexadecyl-2-acetyl-3-(9Z)-octadecenoyl-sn-glycerol + (9Z-octadecenoyl)-sn-glycero-3-phosphocholine. It catalyses the reaction 1-O-hexadecyl-2-O-methyl-sn-glycerol + 1,2-di-(9Z-octadecenoyl)-sn-glycero-3-phosphocholine = 1-O-hexadecyl-2-O-methyl-3-(9Z)-octadecenoyl-sn-glycerol + (9Z-octadecenoyl)-sn-glycero-3-phosphocholine. The enzyme catalyses a 1,2-diacyl-sn-glycero-3-phosphoethanolamine + H2O = a 1-acyl-sn-glycero-3-phosphoethanolamine + a fatty acid + H(+). It carries out the reaction 1-acyl-2-(5Z,8Z,11Z,14Z)-eicosatetraenoyl-sn-glycero-3-phosphoethanolamine + H2O = a 1-acyl-sn-glycero-3-phosphoethanolamine + (5Z,8Z,11Z,14Z)-eicosatetraenoate + H(+). The catalysed reaction is a 1,2-diacyl-sn-glycero-3-phospho-(1'-sn-glycerol) + H2O = 1-acyl-sn-glycero-3-phospho-(1'-sn-glycerol) + a fatty acid + H(+). It catalyses the reaction 1-hexadecanoyl-2-(9Z-octadecenoyl)-sn-glycero-3-phospho-(1'-sn-glycerol) + H2O = 1-hexadecanoyl-sn-glycero-3-phospho-(1'-sn-glycerol) + (9Z)-octadecenoate + H(+). The enzyme catalyses a 1,2-diacyl-sn-glycero-3-phospho-(1'-sn-glycerol) + H2O = 2-acyl-sn-glycero-3-phospho-(1'-sn-glycerol) + a fatty acid + H(+). It carries out the reaction 1-hexadecanoyl-2-(9Z-octadecenoyl)-sn-glycero-3-phospho-(1'-sn-glycerol) + H2O = 2-(9Z-octadecenoyl)-sn-glycero-3-phospho-(1'-sn-glycerol) + hexadecanoate + H(+). With respect to regulation, transacylase activity is completely inhibited by Triton X-100 and partially inhibited by heparin. Moderately activated by Mg(2+) and Ca(2+). Has dual calcium-independent phospholipase and O-acyltransferase activities with a potential role in glycerophospholipid homeostasis and remodeling of acyl groups of lipophilic alcohols present in acidic cellular compartments. Catalyzes hydrolysis of the ester bond of the fatty acyl group attached at sn-1 or sn-2 position of phospholipids (phospholipase A1 or A2 activity) and transfer it to the hydroxyl group at the first carbon of lipophilic alcohols (O-acyltransferase activity). Among preferred fatty acyl donors are phosphatidylcholines, phosphatidylethanolamines, phosphatidylglycerols and phosphatidylserines. Favors sn-2 over sn-1 deacylation of unsaturated fatty acyl groups of phosphatidylcholines, phosphatidylethanolamines, and phosphatidylglycerols. Among preferred fatty acyl acceptors are natural lipophilic alcohols including short-chain ceramide N-acetyl-sphingosine (C2 ceramide), alkylacylglycerols, monoacylglycerols, and acylethanolamides such as anandamide and oleoylethanolamide. Selectively hydrolyzes the sn-1 fatty acyl group of truncated oxidized phospholipids and may play a role in detoxification of reactive oxidized phospholipids during oxidative stress. Required for normal phospholipid degradation in alveolar macrophages with potential implications in the clearance of pulmonary surfactant, which is mainly composed of dipalmitoylphosphatidylcholine (1,2-dihexadecanoyl-sn-glycero-3-phosphocholine). Involved in the first step of bis(monoacylglycero)phosphate (BMP) de novo synthesis from phosphatidylglycerol (1,2-diacyl-sn-glycero-3-phospho-(1'-sn-glycerol), PG). BMP is an important player in cargo sorting and degradation, regulation of cellular cholesterol levels and intercellular communication. At neutral pH, hydrolyzes the sn-1 fatty acyl group of the lysophosphatidylcholines. The chain is Lysosomal phospholipase A and acyltransferase (PLA2G15) from Bos taurus (Bovine).